Here is a 125-residue protein sequence, read N- to C-terminus: MAGPSLACCLLGLLALTSACYIQNCPLGGKRAAPDLDVRKCLPCGPGGKGRCFGPNICCAEELGCFVGTAEALRCQEENYLPSPCQSGQKACGSGGRCAVLGLCCSPDGCHADPACDAEATFSQR.

Positions 1–19 (MAGPSLACCLLGLLALTSA) are cleaved as a signal peptide. Residues cysteine 20 and cysteine 25 are joined by a disulfide bond. Glycine 28 bears the Glycine amide mark. Cystine bridges form between cysteine 41-cysteine 85, cysteine 44-cysteine 58, cysteine 52-cysteine 75, cysteine 59-cysteine 65, cysteine 92-cysteine 104, cysteine 98-cysteine 116, and cysteine 105-cysteine 110.

Belongs to the vasopressin/oxytocin family. As to quaternary structure, interacts with oxytocin receptor (Ki=1.5 nM). Interacts with vasopressin V1aR/AVPR1A (Ki=37 nM), V1bR/AVPR1B (Ki=222 nM) and V2R/AVPR2 receptors (Ki=823 nM).

It localises to the secreted. Neurophysin 1 specifically binds oxytocin. Functionally, oxytocin causes contraction of the smooth muscle of the uterus and of the mammary gland. Acts by binding to oxytocin receptor (OXTR). The polypeptide is Oxytocin-neurophysin 1 (OXT) (Homo sapiens (Human)).